The chain runs to 424 residues: Serine--tRNA ligase (424 aa).

Threonine 231 to glutamate 233 provides a ligand contact to L-serine. ATP is bound at residue arginine 262–glutamate 264. Glutamate 285 is a binding site for L-serine. Residue glutamate 349–serine 352 participates in ATP binding. Serine 385 contacts L-serine.

It belongs to the class-II aminoacyl-tRNA synthetase family. Type-1 seryl-tRNA synthetase subfamily. Homodimer. The tRNA molecule binds across the dimer.

Its subcellular location is the cytoplasm. The catalysed reaction is tRNA(Ser) + L-serine + ATP = L-seryl-tRNA(Ser) + AMP + diphosphate + H(+). It catalyses the reaction tRNA(Sec) + L-serine + ATP = L-seryl-tRNA(Sec) + AMP + diphosphate + H(+). It participates in aminoacyl-tRNA biosynthesis; selenocysteinyl-tRNA(Sec) biosynthesis; L-seryl-tRNA(Sec) from L-serine and tRNA(Sec): step 1/1. Catalyzes the attachment of serine to tRNA(Ser). Is also able to aminoacylate tRNA(Sec) with serine, to form the misacylated tRNA L-seryl-tRNA(Sec), which will be further converted into selenocysteinyl-tRNA(Sec). The protein is Serine--tRNA ligase of Bacillus cereus (strain ZK / E33L).